The primary structure comprises 427 residues: tRNA(Ile)-lysidine synthase (427 aa).

S27–S32 lines the ATP pocket.

It belongs to the tRNA(Ile)-lysidine synthase family.

It localises to the cytoplasm. The catalysed reaction is cytidine(34) in tRNA(Ile2) + L-lysine + ATP = lysidine(34) in tRNA(Ile2) + AMP + diphosphate + H(+). Its function is as follows. Ligates lysine onto the cytidine present at position 34 of the AUA codon-specific tRNA(Ile) that contains the anticodon CAU, in an ATP-dependent manner. Cytidine is converted to lysidine, thus changing the amino acid specificity of the tRNA from methionine to isoleucine. The protein is tRNA(Ile)-lysidine synthase of Streptococcus equi subsp. zooepidemicus (strain H70).